A 1025-amino-acid chain; its full sequence is Multidrug resistance protein MdtC (1025 aa).

The next 12 helical transmembrane spans lie at 3–23, 333–353, 360–380, 387–407, 431–451, 463–483, 528–548, 853–873, 875–895, 897–917, 953–973, and 984–1004; these read FFAL…AITL, EVEQ…FLFL, IIPA…MYLC, LSLM…IVVL, VGFT…PLLL, FAVT…TLTP, LVGV…ISIP, VILI…LYES, VHPL…LLAL, LFNA…IGIV, PIMM…LSGG, and ITIV…TPVV.

Belongs to the resistance-nodulation-cell division (RND) (TC 2.A.6) family. MdtC subfamily. Part of a tripartite efflux system composed of MdtA, MdtB and MdtC. MdtC forms a heteromultimer with MdtB.

Its subcellular location is the cell inner membrane. Functionally, the MdtABC tripartite complex confers resistance against novobiocin and deoxycholate. In Escherichia coli (strain 55989 / EAEC), this protein is Multidrug resistance protein MdtC.